A 138-amino-acid chain; its full sequence is Large ribosomal subunit protein uL16 (138 aa).

Belongs to the universal ribosomal protein uL16 family. In terms of assembly, part of the 50S ribosomal subunit.

Its function is as follows. Binds 23S rRNA and is also seen to make contacts with the A and possibly P site tRNAs. The protein is Large ribosomal subunit protein uL16 of Anaeromyxobacter dehalogenans (strain 2CP-1 / ATCC BAA-258).